The sequence spans 498 residues: MISSKPRLVVPYGLKTLLEGVSRAILKINPPNITQFAAVYFKELIVFREGNTSLDIKDLVKQFHQIKVEKWSEGTTQEKEPECMEEQVETSVVSQEPTRMEKSTDTEEDNIAGPLFMNKTTQFPSVHAEVLLEPEETPEAACGGSPKPSTPKAVTPPSSPSPAAVSQEFAYVPADPAQFAAQMLGNVSSIHSDQSDVLMVDVATSMPVFSEEVLSSEAAEDARVAIPSVYSAEVVALQVLSQTSVHVDLGPKPKDDEAEPTTASSFPLQDEQDPPAYDQAPEVPLQADIEVTSFVHVSSIYNNEPVIEGVTYVEQIPEHIVIPFTDHVASLKDNEPPDSPIPVACDTGMSEKTVGSVSLAQLEVESHYSSVHMEAEASVLFSDTSLKGQPAQFPDAGGSTKAVGSEKPLHLEVEFTALVPGNSGQEESQGSSAAQEMEVKLVLSGEAATAVLSAASVRAAGGSPTPVPEGLTEPELEPELEAALEQGLMKPDAETTTV.

In terms of domain architecture, RIIa spans 12 to 49 (YGLKTLLEGVSRAILKINPPNITQFAAVYFKELIVFRE). 3 disordered regions span residues 74-107 (GTTQ…TDTE), 135-164 (EETP…SPAA), and 247-279 (VDLG…AYDQ). Residues 145–164 (SPKPSTPKAVTPPSSPSPAA) are compositionally biased toward low complexity.

As to quaternary structure, interacts with FSCB. In terms of processing, phosphorylated on tyrosine residues during in vitro capacitation. Dephosphorylation affects its ability to bind calcium. As to expression, expressed in testis.

The protein localises to the cytoplasm. Its subcellular location is the cytoskeleton. It is found in the cell projection. The protein resides in the cilium. It localises to the flagellum. Functionally, may function as a regulator of both motility- and head-associated functions such as capacitation and the acrosome reaction. Binds calcium in vitro. The protein is Calcium-binding tyrosine phosphorylation-regulated protein (CABYR) of Vulpes vulpes (Red fox).